Consider the following 351-residue polypeptide: Glycerol-1-phosphate dehydrogenase [NAD(P)+] (351 aa).

Residues 98–102 and 120–123 contribute to the NAD(+) site; these read GSIID and TTAS. A substrate-binding site is contributed by D125. S129 is an NAD(+) binding site. D172 is a binding site for substrate. Residues D172 and H252 each contribute to the Zn(2+) site. H256 contributes to the substrate binding site. H268 lines the Zn(2+) pocket.

The protein belongs to the glycerol-1-phosphate dehydrogenase family. Zn(2+) serves as cofactor.

Its subcellular location is the cytoplasm. It catalyses the reaction sn-glycerol 1-phosphate + NAD(+) = dihydroxyacetone phosphate + NADH + H(+). The catalysed reaction is sn-glycerol 1-phosphate + NADP(+) = dihydroxyacetone phosphate + NADPH + H(+). It functions in the pathway membrane lipid metabolism; glycerophospholipid metabolism. Functionally, catalyzes the NAD(P)H-dependent reduction of dihydroxyacetonephosphate (DHAP or glycerone phosphate) to glycerol 1-phosphate (G1P). The G1P thus generated is used as the glycerophosphate backbone of phospholipids in the cellular membranes of Archaea. In Thermococcus kodakarensis (strain ATCC BAA-918 / JCM 12380 / KOD1) (Pyrococcus kodakaraensis (strain KOD1)), this protein is Glycerol-1-phosphate dehydrogenase [NAD(P)+].